The chain runs to 643 residues: Mediator of RNA polymerase II transcription subunit 17 (643 aa).

The interval 53–82 (SDSEEDGAERARAGREQWKQEPEEDEGQLK) is disordered. Over residues 60–73 (AERARAGREQWKQE) the composition is skewed to basic and acidic residues.

It belongs to the Mediator complex subunit 17 family. Component of the Mediator complex.

The protein localises to the nucleus. In terms of biological role, component of the Mediator complex, a coactivator involved in the regulated transcription of nearly all RNA polymerase II-dependent genes. Mediator functions as a bridge to convey information from gene-specific regulatory proteins to the basal RNA polymerase II transcription machinery. Mediator is recruited to promoters by direct interactions with regulatory proteins and serves as a scaffold for the assembly of a functional preinitiation complex with RNA polymerase II and the general transcription factors. The chain is Mediator of RNA polymerase II transcription subunit 17 (med17) from Danio rerio (Zebrafish).